The following is a 240-amino-acid chain: Methylthioribulose-1-phosphate dehydratase (240 aa).

Substrate is bound at residue cysteine 99. 2 residues coordinate Zn(2+): histidine 116 and histidine 118. The active-site Proton donor/acceptor is glutamate 145. Residue histidine 201 participates in Zn(2+) binding.

Belongs to the aldolase class II family. MtnB subfamily. Zn(2+) is required as a cofactor.

The protein localises to the cytoplasm. The enzyme catalyses 5-(methylsulfanyl)-D-ribulose 1-phosphate = 5-methylsulfanyl-2,3-dioxopentyl phosphate + H2O. It functions in the pathway amino-acid biosynthesis; L-methionine biosynthesis via salvage pathway; L-methionine from S-methyl-5-thio-alpha-D-ribose 1-phosphate: step 2/6. Functionally, catalyzes the dehydration of methylthioribulose-1-phosphate (MTRu-1-P) into 2,3-diketo-5-methylthiopentyl-1-phosphate (DK-MTP-1-P). The sequence is that of Methylthioribulose-1-phosphate dehydratase from Paracoccidioides brasiliensis (strain Pb03).